We begin with the raw amino-acid sequence, 113 residues long: Large ribosomal subunit protein bL19 (113 aa).

It belongs to the bacterial ribosomal protein bL19 family.

Functionally, this protein is located at the 30S-50S ribosomal subunit interface and may play a role in the structure and function of the aminoacyl-tRNA binding site. In Desulfitobacterium hafniense (strain DSM 10664 / DCB-2), this protein is Large ribosomal subunit protein bL19.